The chain runs to 259 residues: uncharacterized protein (259 aa).

It belongs to the ParA family.

This is an uncharacterized protein from Methanocaldococcus jannaschii (strain ATCC 43067 / DSM 2661 / JAL-1 / JCM 10045 / NBRC 100440) (Methanococcus jannaschii).